Reading from the N-terminus, the 167-residue chain is Ribosome maturation factor RimM (167 aa).

The region spanning 94 to 165 (ENEYYYSDII…TIRITPMEGL (72 aa)) is the PRC barrel domain.

This sequence belongs to the RimM family. Binds ribosomal protein uS19.

It is found in the cytoplasm. In terms of biological role, an accessory protein needed during the final step in the assembly of 30S ribosomal subunit, possibly for assembly of the head region. Essential for efficient processing of 16S rRNA. May be needed both before and after RbfA during the maturation of 16S rRNA. It has affinity for free ribosomal 30S subunits but not for 70S ribosomes. The protein is Ribosome maturation factor RimM of Staphylococcus haemolyticus (strain JCSC1435).